A 678-amino-acid polypeptide reads, in one-letter code: Glycine--tRNA ligase beta subunit (678 aa).

The protein belongs to the class-II aminoacyl-tRNA synthetase family. Tetramer of two alpha and two beta subunits.

It localises to the cytoplasm. The enzyme catalyses tRNA(Gly) + glycine + ATP = glycyl-tRNA(Gly) + AMP + diphosphate. This is Glycine--tRNA ligase beta subunit from Streptococcus suis (strain 98HAH33).